Here is a 449-residue protein sequence, read N- to C-terminus: Heterogeneous nuclear ribonucleoprotein H2 (449 aa).

Residue Met1 is modified to N-acetylmethionine. An N-acetylmethionine; in Heterogeneous nuclear ribonucleoprotein H2, N-terminally processed modification is found at Met2. The RRM 1 domain maps to 11-90; sequence FVVKVRGLPW…RYVEVFKSNS (80 aa). At Ser23 the chain carries Phosphoserine. Lys35 is covalently cross-linked (Glycyl lysine isopeptide (Lys-Gly) (interchain with G-Cter in SUMO2)). Ser54 and Ser63 each carry phosphoserine. A Glycyl lysine isopeptide (Lys-Gly) (interchain with G-Cter in SUMO2) cross-link involves residue Lys87. Ser90 is subject to Phosphoserine. Lys98 is covalently cross-linked (Glycyl lysine isopeptide (Lys-Gly) (interchain with G-Cter in SUMO2)). The region spanning 111–188 is the RRM 2 domain; it reads GFVRLRGLPF…RYIEIFKSSR (78 aa). Arg233 carries the post-translational modification Dimethylated arginine; alternate. Arg233 bears the Omega-N-methylarginine; alternate mark. The stretch at 234 to 249 is one 1-1 repeat; the sequence is GAYGGGYGGYDDYGGY. The interval 234-433 is 2 X 16 AA Gly-rich approximate repeats; it reads GAYGGGYGGY…YGGQSSMSGY (200 aa). The residue at position 246 (Tyr246) is a Phosphotyrosine. Positions 289-364 constitute an RRM 3 domain; sequence HCVHMRGLPY…RYVELFLNST (76 aa). Ser310 bears the Phosphoserine mark. 3 consecutive repeat copies span residues 354–372, 374–392, and 418–433. Positions 354–392 are 2 X 19 AA perfect repeats; it reads HRYVELFLNSTAGTSGGAYDHSYVELFLNSTAGASGGAY.

Component of a ribonucleoprotein complex containing mRNAs and RNA-binding proteins including DDX5, HNRNPH2 and SRSF1 as well as splicing regulator ARVCF. Interacts with TXNL4/DIM1. In terms of tissue distribution, expressed ubiquitously.

The protein localises to the nucleus. Its subcellular location is the nucleoplasm. Functionally, this protein is a component of the heterogeneous nuclear ribonucleoprotein (hnRNP) complexes which provide the substrate for the processing events that pre-mRNAs undergo before becoming functional, translatable mRNAs in the cytoplasm. Binds poly(RG). The chain is Heterogeneous nuclear ribonucleoprotein H2 (HNRNPH2) from Homo sapiens (Human).